The sequence spans 290 residues: 33 kDa chaperonin (290 aa).

2 cysteine pairs are disulfide-bonded: Cys235–Cys237 and Cys268–Cys271.

This sequence belongs to the HSP33 family. Under oxidizing conditions two disulfide bonds are formed involving the reactive cysteines. Under reducing conditions zinc is bound to the reactive cysteines and the protein is inactive.

It is found in the cytoplasm. Redox regulated molecular chaperone. Protects both thermally unfolding and oxidatively damaged proteins from irreversible aggregation. Plays an important role in the bacterial defense system toward oxidative stress. The polypeptide is 33 kDa chaperonin (Streptococcus pyogenes serotype M49).